Consider the following 53-residue polypeptide: VSVDCSEYPKPGCMMERLPLCGSDNKTYNDKCNFCNAVVESNGTLTLNHFGEC.

A Kazal-like domain is found at 3 to 53 (VDCSEYPKPGCMMERLPLCGSDNKTYNDKCNFCNAVVESNGTLTLNHFGEC). 3 cysteine pairs are disulfide-bonded: Cys5-Cys35, Cys13-Cys32, and Cys21-Cys53. N-linked (GlcNAc...) asparagine glycosylation is present at Asn42.

It localises to the secreted. The protein is Ovomucoid of Turnix sylvaticus (Common buttonquail).